Reading from the N-terminus, the 66-residue chain is MAYKLKSHRGAAKRFKKTASGGFKRKQAHLRHILTKKTSKRKLHLRPKMMVHKNDHGLVSRMLPFA.

Residues 1-22 (MAYKLKSHRGAAKRFKKTASGG) are disordered.

Belongs to the bacterial ribosomal protein bL35 family.

The protein is Large ribosomal subunit protein bL35 of Pseudoalteromonas translucida (strain TAC 125).